The following is a 42-amino-acid chain: MKLIAAYLLAYLGGNSSPSAADVKDILNAVGAEANEEKLEFL.

Belongs to the eukaryotic ribosomal protein P1/P2 family. In terms of assembly, P1 and P2 exist as dimers at the large ribosomal subunit. Post-translationally, phosphorylated.

Its function is as follows. Plays an important role in the elongation step of protein synthesis. The protein is Large ribosomal subunit protein P2 of Triticum aestivum (Wheat).